Reading from the N-terminus, the 278-residue chain is Tryptophan 2,3-dioxygenase (278 aa).

Substrate contacts are provided by residues 47 to 51 (FIVQH), Tyr109, and Arg113. Position 236 (His236) interacts with heme. Substrate is bound at residue Thr250.

Belongs to the tryptophan 2,3-dioxygenase family. Homotetramer. The cofactor is heme.

It carries out the reaction L-tryptophan + O2 = N-formyl-L-kynurenine. The protein operates within amino-acid degradation; L-tryptophan degradation via kynurenine pathway; L-kynurenine from L-tryptophan: step 1/2. In terms of biological role, heme-dependent dioxygenase that catalyzes the oxidative cleavage of the L-tryptophan (L-Trp) pyrrole ring and converts L-tryptophan to N-formyl-L-kynurenine. Catalyzes the oxidative cleavage of the indole moiety. This is Tryptophan 2,3-dioxygenase from Ralstonia pickettii (strain 12J).